The sequence spans 189 residues: dTTP/UTP pyrophosphatase (189 aa).

The Proton acceptor role is filled by D73.

This sequence belongs to the Maf family. YhdE subfamily. A divalent metal cation is required as a cofactor.

Its subcellular location is the cytoplasm. It carries out the reaction dTTP + H2O = dTMP + diphosphate + H(+). It catalyses the reaction UTP + H2O = UMP + diphosphate + H(+). Functionally, nucleoside triphosphate pyrophosphatase that hydrolyzes dTTP and UTP. May have a dual role in cell division arrest and in preventing the incorporation of modified nucleotides into cellular nucleic acids. This Vibrio parahaemolyticus serotype O3:K6 (strain RIMD 2210633) protein is dTTP/UTP pyrophosphatase.